Reading from the N-terminus, the 268-residue chain is Putative carbamate hydrolase RutD (268 aa).

Residues 24 to 243 (VILSAGLGGS…NATLDIAPWG (220 aa)) form the AB hydrolase-1 domain.

Belongs to the AB hydrolase superfamily. Hydrolase RutD family.

The catalysed reaction is carbamate + 2 H(+) = NH4(+) + CO2. In terms of biological role, involved in pyrimidine catabolism. May facilitate the hydrolysis of carbamate, a reaction that can also occur spontaneously. This chain is Putative carbamate hydrolase RutD, found in Caulobacter sp. (strain K31).